Here is a 205-residue protein sequence, read N- to C-terminus: Adenylyl-sulfate kinase (205 aa).

31–38 (GLSGAGKS) provides a ligand contact to ATP. Serine 105 functions as the Phosphoserine intermediate in the catalytic mechanism.

It belongs to the APS kinase family.

The enzyme catalyses adenosine 5'-phosphosulfate + ATP = 3'-phosphoadenylyl sulfate + ADP + H(+). The protein operates within sulfur metabolism; hydrogen sulfide biosynthesis; sulfite from sulfate: step 2/3. Its function is as follows. Catalyzes the synthesis of activated sulfate. This Shewanella sp. (strain MR-7) protein is Adenylyl-sulfate kinase.